A 61-amino-acid chain; its full sequence is Large ribosomal subunit protein uL30 (61 aa).

It belongs to the universal ribosomal protein uL30 family. Part of the 50S ribosomal subunit.

This is Large ribosomal subunit protein uL30 from Neisseria meningitidis serogroup C (strain 053442).